The sequence spans 141 residues: MLTAEDKKLIVQVWEKVAGHQEEFGSEALQRMFLAYPQTKTYFPHFDLHPGSEQVRGHGKKVAAALGNAVKSLDNLSQALSELSNLHAYNLRVDPVNFKLLAQCFQVVLAAHLGKDYSPEMHAAFDKFLSAVAAVLAEKYR.

One can recognise a Globin domain in the interval M1–R141. Heme b contacts are provided by H58 and H87.

It belongs to the globin family. Heterotetramer of two alpha-D chains and two beta chains. As to expression, red blood cells.

In terms of biological role, involved in oxygen transport from the lung to the various peripheral tissues. This Cairina moschata (Muscovy duck) protein is Hemoglobin subunit alpha-D (HBAD).